The chain runs to 205 residues: DNA-directed RNA polymerase subunit 5 (205 aa).

Belongs to the archaeal Rpo5/eukaryotic RPB5 RNA polymerase subunit family.

It is found in the virion. The enzyme catalyses RNA(n) + a ribonucleoside 5'-triphosphate = RNA(n+1) + diphosphate. In terms of biological role, DNA-dependent RNA polymerase catalyzes the transcription of DNA into RNA using the four ribonucleoside triphosphates as substrates. This Acanthamoeba polyphaga (Amoeba) protein is DNA-directed RNA polymerase subunit 5.